The chain runs to 286 residues: Bifunctional protein FolD (286 aa).

NADP(+) is bound by residues 165–167 (GRS), Ser190, and Val231.

This sequence belongs to the tetrahydrofolate dehydrogenase/cyclohydrolase family. In terms of assembly, homodimer.

The catalysed reaction is (6R)-5,10-methylene-5,6,7,8-tetrahydrofolate + NADP(+) = (6R)-5,10-methenyltetrahydrofolate + NADPH. It catalyses the reaction (6R)-5,10-methenyltetrahydrofolate + H2O = (6R)-10-formyltetrahydrofolate + H(+). It functions in the pathway one-carbon metabolism; tetrahydrofolate interconversion. In terms of biological role, catalyzes the oxidation of 5,10-methylenetetrahydrofolate to 5,10-methenyltetrahydrofolate and then the hydrolysis of 5,10-methenyltetrahydrofolate to 10-formyltetrahydrofolate. The chain is Bifunctional protein FolD from Bacillus thuringiensis (strain Al Hakam).